The chain runs to 625 residues: Protein SUPPRESSOR OF GENE SILENCING 3 (625 aa).

Disordered stretches follow at residues 1 to 20 (MSSRAGPMSKEKNVQGGYRP), 30 to 148 (AGTR…SAQH), and 161 to 195 (VDNASEEENDSDALDDSDDDLASDDYDSDVSQKSH). Residues 54-70 (KPGNTSGKTWVSQNSNP) show a composition bias toward polar residues. Over residues 80 to 94 (GRGSNVSGRGNNVSG) the composition is skewed to low complexity. The segment covering 161–188 (VDNASEEENDSDALDDSDDDLASDDYDS) has biased composition (acidic residues). Coiled coils occupy residues 452–533 (KNKL…QQQE) and 564–615 (IEFQ…EQLM).

Belongs to the SGS3 family. In terms of assembly, interacts with begomoviruses protein V2. Interacts with SGIP1 in cytoplasmic granules.

The protein resides in the cytoplasm. The protein localises to the perinuclear region. Its subcellular location is the cytoplasmic granule. Required for post-transcriptional gene silencing and natural virus resistance. May bind nucleic acids and is essential for the biogenesis of trans-acting siRNAs but is not required for silencing induced by IR-PTGS. Involved in the juvenile-to-adult transition regulation. In case of begomoviruses infection, it is targeted by the viral protein V2 leading to suppression of post-transcriptional gene silencing. Involved in the mechanisms necessary for quick response to heat and subsequent heritable transgenerational memory of heat acclimation (global warming) such as early flowering and attenuated immunity; this process includes epigenetic regulation as well as post-transcriptional gene silencing (PTGS). In response to heat, HSFA2 is activated and promotes the expression of REF6 which in turn derepresses HSFA2, thus establishing an inheritable feedback loop able to trigger SGIP1 and subsequent SGIP1-mediated SGS3 degradation; this prevents the biosynthesis of trans-acting siRNA (tasiRNA) and leads to the release of HTT5, which drives early flowering but attenuates immunity. The chain is Protein SUPPRESSOR OF GENE SILENCING 3 from Arabidopsis thaliana (Mouse-ear cress).